The following is a 576-amino-acid chain: Nuclear/nucleolar GTPase 2 (576 aa).

Disordered stretches follow at residues 1–61 (MVKK…SNEY) and 166–186 (QDAF…EEED). A compositionally biased stretch (basic and acidic residues) spans 16–34 (HSLDANRADGKKKTTETRS). Over residues 42 to 52 (KMYKTRPKRNA) the composition is skewed to basic residues. A CP-type G domain is found at 206–367 (WGELYKVIDS…LIDCPGVVYQ (162 aa)). Residues 224-228 (DARDP) carry the DARXP motif motif. The G4 stretch occupies residues 254-257 (NKCD). 254 to 257 (NKCD) contributes to the GTP binding site. Positions 283–285 (SVN) are G5. Residues 316–323 (GYPNVGKS) are G1. 319-324 (NVGKSS) lines the GTP pocket. Residues 342–346 (GETKV) form a G2 region. The G3 stretch occupies residues 360 to 363 (DCPG). Residue G363 coordinates GTP. The interval 502–576 (TQQQKDVPVQ…DEEDESDSAE (75 aa)) is disordered. The span at 509–530 (PVQRDFYDEKDLKDDKKAKEST) shows a compositional bias: basic and acidic residues. Residues 531-576 (ETDAENGTDAEEDEDAVSEDGVESDSDADEDAVSENDEEDESDSAE) are compositionally biased toward acidic residues.

It belongs to the TRAFAC class YlqF/YawG GTPase family. RsgA subfamily. Interacts with the 60S ribosomal proteins RPL10AA, RPL10AB and RPL10AC. Ubiquitous, with higher levels in meristematic regions.

It localises to the nucleus. It is found in the nucleolus. Its activity is regulated as follows. The GTPase activity is stimulated in the presence of the 60S ribosomal subunit. Functionally, GTPase involved in pre-60S ribosomal subunit maturation. In Arabidopsis thaliana (Mouse-ear cress), this protein is Nuclear/nucleolar GTPase 2.